A 476-amino-acid chain; its full sequence is ENTH domain-containing protein C794.11c (476 aa).

One can recognise an ENTH domain in the interval 30–154; that stretch reads YTSMEARVRE…VELLNDSERI (125 aa). Disordered stretches follow at residues 157 to 198, 213 to 308, 410 to 429, and 444 to 472; these read ERKR…GSYR, NGYH…GFGD, QAGLGLTSQQPTAAKSSGSN, and VHQENSTRERVVSSSSEPVSKTQNFLDND. Ser-173 carries the phosphoserine modification. Composition is skewed to low complexity over residues 178-198 and 213-222; these read RISTSSKSRFPSFGSSRGSYR and NGYHDSSSMS. The residue at position 228 (Ser-228) is a Phosphoserine. Residues 229–240 are compositionally biased toward acidic residues; sequence DNDVEEYNEDGD. A Phosphotyrosine modification is found at Tyr-235. Phosphoserine is present on residues Ser-243 and Ser-244. Residues 262 to 271 show a composition bias toward basic and acidic residues; the sequence is QSDKAPEQPK. Residues 444-454 are compositionally biased toward basic and acidic residues; the sequence is VHQENSTRERV. The residue at position 459 (Ser-459) is a Phosphoserine.

In Schizosaccharomyces pombe (strain 972 / ATCC 24843) (Fission yeast), this protein is ENTH domain-containing protein C794.11c.